Here is a 393-residue protein sequence, read N- to C-terminus: Double-stranded RNA-binding protein 5 (393 aa).

2 DRBM domains span residues methionine 1–serine 70 and isoleucine 87–lysine 155. 2 disordered regions span residues alanine 220–lysine 251 and asparagine 335–lysine 371. The span at valine 347 to asparagine 361 shows a compositional bias: polar residues.

Heterodimer with DRB1, DRB2 or DRB4. Interacts with DCL1 and DCL3. In terms of tissue distribution, expressed in the shoot apical meristem (SAM).

Functionally, binds double-stranded RNA. May be involved in RNA-mediated silencing. The polypeptide is Double-stranded RNA-binding protein 5 (DRB5) (Arabidopsis thaliana (Mouse-ear cress)).